The primary structure comprises 157 residues: Peptide methionine sulfoxide reductase MsrA (157 aa).

Residue C13 is part of the active site.

The protein belongs to the MsrA Met sulfoxide reductase family.

The catalysed reaction is L-methionyl-[protein] + [thioredoxin]-disulfide + H2O = L-methionyl-(S)-S-oxide-[protein] + [thioredoxin]-dithiol. It catalyses the reaction [thioredoxin]-disulfide + L-methionine + H2O = L-methionine (S)-S-oxide + [thioredoxin]-dithiol. Functionally, has an important function as a repair enzyme for proteins that have been inactivated by oxidation. Catalyzes the reversible oxidation-reduction of methionine sulfoxide in proteins to methionine. The protein is Peptide methionine sulfoxide reductase MsrA of Methanococcus maripaludis (strain C6 / ATCC BAA-1332).